The sequence spans 393 residues: Homoserine O-succinyltransferase (393 aa).

Positions 62–372 (NAVLVCHALN…PHGHDAFLLD (311 aa)) constitute an AB hydrolase-1 domain. The active-site Nucleophile is Ser168. Residue Arg238 coordinates substrate. Catalysis depends on residues Asp333 and His366. Asp367 lines the substrate pocket.

The protein belongs to the AB hydrolase superfamily. MetX family. In terms of assembly, homodimer.

The protein localises to the cytoplasm. It catalyses the reaction L-homoserine + succinyl-CoA = O-succinyl-L-homoserine + CoA. The protein operates within amino-acid biosynthesis; L-methionine biosynthesis via de novo pathway; O-succinyl-L-homoserine from L-homoserine: step 1/1. Functionally, transfers a succinyl group from succinyl-CoA to L-homoserine, forming succinyl-L-homoserine. The protein is Homoserine O-succinyltransferase of Cupriavidus necator (strain ATCC 17699 / DSM 428 / KCTC 22496 / NCIMB 10442 / H16 / Stanier 337) (Ralstonia eutropha).